Reading from the N-terminus, the 98-residue chain is MNPSAAVVLCLVLLSLSGTQGIPLARTVRCTCIDFHEQPLRPRAIGKLEIIPASLSCPHVEIIATMKKNNEKRCLNPESEAIKSLLKAVSQRRSKRAP.

The N-terminal stretch at 1–21 is a signal peptide; sequence MNPSAAVVLCLVLLSLSGTQG. Arg-26 bears the Citrulline mark. 2 disulfides stabilise this stretch: Cys-30-Cys-57 and Cys-32-Cys-74.

Belongs to the intercrine alpha (chemokine CxC) family. As to quaternary structure, monomer, dimer, and tetramer. Interacts with CXCR3 (via N-terminus). In the central nervous system, CXCL10 is predominantly localized to activated neurons. Expressed in both microglia and astrocytes.

It is found in the secreted. Functionally, pro-inflammatory cytokine that is involved in a wide variety of processes such as chemotaxis, differentiation, and activation of peripheral immune cells, regulation of cell growth, apoptosis and modulation of angiostatic effects. Plays thereby an important role during viral infections by stimulating the activation and migration of immune cells to the infected sites. Mechanistically, binding of CXCL10 to the CXCR3 receptor activates G protein-mediated signaling and results in downstream activation of phospholipase C-dependent pathway, an increase in intracellular calcium production and actin reorganization. In turn, recruitment of activated Th1 lymphocytes occurs at sites of inflammation. Activation of the CXCL10/CXCR3 axis also plays an important role in neurons in response to brain injury for activating microglia, the resident macrophage population of the central nervous system, and directing them to the lesion site. This recruitment is an essential element for neuronal reorganization. The chain is C-X-C motif chemokine 10 (Cxcl10) from Rattus norvegicus (Rat).